Reading from the N-terminus, the 480-residue chain is UDP-N-acetylmuramate--L-alanine ligase (480 aa).

ATP is bound at residue 125–131; it reads GTHGKTT.

The protein belongs to the MurCDEF family.

It is found in the cytoplasm. It catalyses the reaction UDP-N-acetyl-alpha-D-muramate + L-alanine + ATP = UDP-N-acetyl-alpha-D-muramoyl-L-alanine + ADP + phosphate + H(+). Its pathway is cell wall biogenesis; peptidoglycan biosynthesis. Cell wall formation. This is UDP-N-acetylmuramate--L-alanine ligase from Ectopseudomonas mendocina (strain ymp) (Pseudomonas mendocina).